The primary structure comprises 185 residues: Guanylate kinase (185 aa).

In terms of domain architecture, Guanylate kinase-like spans 4–181 (GALYVVSGPS…ACNDLISIIE (178 aa)). 11–18 (GPSGAGKS) serves as a coordination point for ATP.

The protein belongs to the guanylate kinase family.

It is found in the cytoplasm. The enzyme catalyses GMP + ATP = GDP + ADP. In terms of biological role, essential for recycling GMP and indirectly, cGMP. The polypeptide is Guanylate kinase (Fusobacterium nucleatum subsp. nucleatum (strain ATCC 25586 / DSM 15643 / BCRC 10681 / CIP 101130 / JCM 8532 / KCTC 2640 / LMG 13131 / VPI 4355)).